A 182-amino-acid polypeptide reads, in one-letter code: UPF0397 protein SPT_0523 (182 aa).

A run of 5 helical transmembrane segments spans residues 10–30 (VVAVGIGAALFVVIGMINIPT), 46–66 (LLSIIFGPIIGLLVGLIGHAI), 73–93 (YGLWWTWIIASGLFGLVVGLF), 109–129 (ILIFNLIQLLANALVWGVLAP), and 148–168 (IVAGIANGVSVAIAGTLLLLA).

It belongs to the UPF0397 family.

It localises to the cell membrane. In Streptococcus pneumoniae (strain Taiwan19F-14), this protein is UPF0397 protein SPT_0523.